Consider the following 326-residue polypeptide: D-alanine--D-alanine ligase (326 aa).

The ATP-grasp domain maps to 112–312; sequence KRIWRFEGLP…YENLCLGILA (201 aa). 138–193 is a binding site for ATP; sequence LQALGAPMIVKPSREGSTIGLTKVWTAEECDQAYVLASRYDPEVLCEEFIEGDETT. Positions 265, 279, and 281 each coordinate Mg(2+).

It belongs to the D-alanine--D-alanine ligase family. It depends on Mg(2+) as a cofactor. Mn(2+) is required as a cofactor.

It localises to the cytoplasm. The enzyme catalyses 2 D-alanine + ATP = D-alanyl-D-alanine + ADP + phosphate + H(+). It functions in the pathway cell wall biogenesis; peptidoglycan biosynthesis. Its function is as follows. Cell wall formation. This Delftia acidovorans (strain DSM 14801 / SPH-1) protein is D-alanine--D-alanine ligase.